The sequence spans 113 residues: Hydrogenase maturation factor HybF (113 aa).

Residues His2 and Glu3 each contribute to the Ni(2+) site. 4 residues coordinate Zn(2+): Cys73, Cys76, Cys89, and Cys92.

This sequence belongs to the HypA/HybF family. HybF subfamily.

Functionally, involved in the maturation of [NiFe] hydrogenases. Required for nickel insertion into the metal center of the hydrogenase. The chain is Hydrogenase maturation factor HybF from Escherichia coli O6:H1 (strain CFT073 / ATCC 700928 / UPEC).